The chain runs to 190 residues: Elongation factor P-like protein (190 aa).

Belongs to the elongation factor P family.

This Proteus mirabilis (strain HI4320) protein is Elongation factor P-like protein.